The sequence spans 521 residues: Medium/long-chain-fatty-acid--[acyl-carrier-protein] ligase MbtM (521 aa).

It belongs to the ATP-dependent AMP-binding enzyme family.

The catalysed reaction is a long-chain fatty acid + holo-[ACP] + ATP = a long-chain fatty acyl-[ACP] + AMP + diphosphate. The enzyme catalyses a medium-chain fatty acid + holo-[ACP] + ATP = a medium-chain fatty acyl-[ACP] + AMP + diphosphate. The protein operates within siderophore biosynthesis; mycobactin biosynthesis. Functionally, activates lipidic moieties required for mycobactin biosynthesis. Converts medium- to long-chain aliphatic fatty acids into acyl adenylate, which is further transferred on to the phosphopantetheine arm of the carrier protein MbtL. This chain is Medium/long-chain-fatty-acid--[acyl-carrier-protein] ligase MbtM (mbtM), found in Mycobacterium bovis (strain ATCC BAA-935 / AF2122/97).